We begin with the raw amino-acid sequence, 229 residues long: Putative N-acetylmannosamine-6-phosphate 2-epimerase 2 (229 aa).

The protein belongs to the NanE family.

It catalyses the reaction an N-acyl-D-glucosamine 6-phosphate = an N-acyl-D-mannosamine 6-phosphate. It functions in the pathway amino-sugar metabolism; N-acetylneuraminate degradation; D-fructose 6-phosphate from N-acetylneuraminate: step 3/5. Converts N-acetylmannosamine-6-phosphate (ManNAc-6-P) to N-acetylglucosamine-6-phosphate (GlcNAc-6-P). This Salmonella paratyphi A (strain ATCC 9150 / SARB42) protein is Putative N-acetylmannosamine-6-phosphate 2-epimerase 2.